A 464-amino-acid chain; its full sequence is Cysteine--tRNA ligase (464 aa).

Residue cysteine 28 coordinates Zn(2+). Residues 30–40 carry the 'HIGH' region motif; it reads ITAYDFCHIGH. Zn(2+)-binding residues include cysteine 210, histidine 235, and glutamate 239. The short motif at 267–271 is the 'KMSKS' region element; sequence KMSKS. Position 270 (lysine 270) interacts with ATP.

The protein belongs to the class-I aminoacyl-tRNA synthetase family. In terms of assembly, monomer. It depends on Zn(2+) as a cofactor.

The protein localises to the cytoplasm. The catalysed reaction is tRNA(Cys) + L-cysteine + ATP = L-cysteinyl-tRNA(Cys) + AMP + diphosphate. This is Cysteine--tRNA ligase from Buchnera aphidicola subsp. Baizongia pistaciae (strain Bp).